We begin with the raw amino-acid sequence, 195 residues long: ATP-dependent Clp protease proteolytic subunit (195 aa).

The active-site Nucleophile is Ser-98. The active site involves His-123.

The protein belongs to the peptidase S14 family. As to quaternary structure, fourteen ClpP subunits assemble into 2 heptameric rings which stack back to back to give a disk-like structure with a central cavity, resembling the structure of eukaryotic proteasomes.

It localises to the cytoplasm. The catalysed reaction is Hydrolysis of proteins to small peptides in the presence of ATP and magnesium. alpha-casein is the usual test substrate. In the absence of ATP, only oligopeptides shorter than five residues are hydrolyzed (such as succinyl-Leu-Tyr-|-NHMec, and Leu-Tyr-Leu-|-Tyr-Trp, in which cleavage of the -Tyr-|-Leu- and -Tyr-|-Trp bonds also occurs).. Its function is as follows. Cleaves peptides in various proteins in a process that requires ATP hydrolysis. Has a chymotrypsin-like activity. Plays a major role in the degradation of misfolded proteins. The protein is ATP-dependent Clp protease proteolytic subunit of Staphylococcus haemolyticus (strain JCSC1435).